Consider the following 513-residue polypeptide: U3 small nucleolar RNA-associated protein 15 (513 aa).

6 WD repeats span residues 37-78 (KEHN…KTFS), 79-118 (RFKD…TILL), 124-162 (THPT…EPQL), 166-206 (GATD…STPI), 210-247 (NHDQ…KLYE), and 250-294 (NFNK…QVKF). The disordered stretch occupies residues 332-354 (KKKEKRSSDKENAPASFNKNAKS).

As to quaternary structure, interacts with snoRNA U3. Interacts with MPP10. Component of the ribosomal small subunit (SSU) processome composed of at least 40 protein subunits and snoRNA U3. In the absence of snoRNA3, forms a complex with other t-UTPs. This complex can associate with pre-18S ribosomal RNAs.

The protein resides in the nucleus. The protein localises to the nucleolus. Functionally, involved in nucleolar processing of pre-18S ribosomal RNA. Required for optimal pre-ribosomal RNA transcription by RNA polymerase I together with a subset of U3 proteins required for transcription (t-UTPs). The sequence is that of U3 small nucleolar RNA-associated protein 15 (UTP15) from Saccharomyces cerevisiae (strain ATCC 204508 / S288c) (Baker's yeast).